A 366-amino-acid chain; its full sequence is Phospho-N-acetylmuramoyl-pentapeptide-transferase (366 aa).

10 helical membrane passes run 27–47, 71–91, 93–113, 134–154, 174–194, 205–225, 245–265, 268–288, 294–314, and 343–363; these read AAMFTAALIVFLFGPKIIASL, TPTMGGLMILAGIVGSSLLWA, LSNVYVVATLLVTLGFGAIGF, LAIEFLIAGIAVFFMMEAAKI, ALLNVGYFFIVFGGFVIVSAG, GLAIVPVMIASAAFGLIAYLA, LAVILGSVIGAGLGFLWFNAP, AIFMGDTGSLALGGLIGTVAV, IVMVIIGGLFVMETLSVIIQV, and QVVIRFWIIAVGLAMLGLATL.

It belongs to the glycosyltransferase 4 family. MraY subfamily. Mg(2+) is required as a cofactor.

It localises to the cell inner membrane. The enzyme catalyses UDP-N-acetyl-alpha-D-muramoyl-L-alanyl-gamma-D-glutamyl-meso-2,6-diaminopimeloyl-D-alanyl-D-alanine + di-trans,octa-cis-undecaprenyl phosphate = di-trans,octa-cis-undecaprenyl diphospho-N-acetyl-alpha-D-muramoyl-L-alanyl-D-glutamyl-meso-2,6-diaminopimeloyl-D-alanyl-D-alanine + UMP. It participates in cell wall biogenesis; peptidoglycan biosynthesis. Functionally, catalyzes the initial step of the lipid cycle reactions in the biosynthesis of the cell wall peptidoglycan: transfers peptidoglycan precursor phospho-MurNAc-pentapeptide from UDP-MurNAc-pentapeptide onto the lipid carrier undecaprenyl phosphate, yielding undecaprenyl-pyrophosphoryl-MurNAc-pentapeptide, known as lipid I. The polypeptide is Phospho-N-acetylmuramoyl-pentapeptide-transferase (Allorhizobium ampelinum (strain ATCC BAA-846 / DSM 112012 / S4) (Agrobacterium vitis (strain S4))).